Consider the following 327-residue polypeptide: Phenylalanine--tRNA ligase alpha subunit (327 aa).

Position 252 (glutamate 252) interacts with Mg(2+).

It belongs to the class-II aminoacyl-tRNA synthetase family. Phe-tRNA synthetase alpha subunit type 1 subfamily. Tetramer of two alpha and two beta subunits. Requires Mg(2+) as cofactor.

The protein localises to the cytoplasm. It catalyses the reaction tRNA(Phe) + L-phenylalanine + ATP = L-phenylalanyl-tRNA(Phe) + AMP + diphosphate + H(+). The protein is Phenylalanine--tRNA ligase alpha subunit of Aeromonas hydrophila subsp. hydrophila (strain ATCC 7966 / DSM 30187 / BCRC 13018 / CCUG 14551 / JCM 1027 / KCTC 2358 / NCIMB 9240 / NCTC 8049).